The sequence spans 455 residues: Keratin, type I cuticular Ha5 (455 aa).

The head stretch occupies residues 1-97 (MASKCLKASF…FGEGILTGNE (97 aa)). The region spanning 97–408 (EKETMQFLND…GLLDSEDCKL (312 aa)) is the IF rod domain. The tract at residues 98–132 (KETMQFLNDRLASYLEKVRQLERENAELESRIRDW) is coil 1A. The segment at 133 to 143 (CEQQVPYLCPD) is linker 1. The coil 1B stretch occupies residues 144-244 (YQSYFQTIEE…HEEEVNSLRC (101 aa)). Residues 245-260 (QLGDRLNVEVDAAPPV) form a linker 12 region. Residues 261–404 (DLNRVLNEMR…STYRGLLDSE (144 aa)) are coil 2. Positions 405 to 455 (DCKLPCNPCAPDHSPSKSCLPCLPAASCGPGTAHTTCSPRPICVSCPGSRF) are tail.

This sequence belongs to the intermediate filament family.

The protein is Keratin, type I cuticular Ha5 of Ovis aries (Sheep).